We begin with the raw amino-acid sequence, 1155 residues long: DNA-directed RNA polymerase subunit beta (1155 aa).

Belongs to the RNA polymerase beta chain family. As to quaternary structure, the RNAP catalytic core consists of 2 alpha, 1 beta, 1 beta' and 1 omega subunit. When a sigma factor is associated with the core the holoenzyme is formed, which can initiate transcription.

It carries out the reaction RNA(n) + a ribonucleoside 5'-triphosphate = RNA(n+1) + diphosphate. Functionally, DNA-dependent RNA polymerase catalyzes the transcription of DNA into RNA using the four ribonucleoside triphosphates as substrates. This chain is DNA-directed RNA polymerase subunit beta, found in Borrelia duttonii (strain Ly).